Reading from the N-terminus, the 328-residue chain is Ribosomal RNA large subunit methyltransferase F (328 aa).

The interval 1–38 is disordered; that stretch reads MTDTPKPPRKKPQRPAKPAAPREKATLHPRNRHQGHYD.

The protein belongs to the methyltransferase superfamily. METTL16/RlmF family.

It localises to the cytoplasm. The catalysed reaction is adenosine(1618) in 23S rRNA + S-adenosyl-L-methionine = N(6)-methyladenosine(1618) in 23S rRNA + S-adenosyl-L-homocysteine + H(+). Functionally, specifically methylates the adenine in position 1618 of 23S rRNA. This Pseudomonas syringae pv. tomato (strain ATCC BAA-871 / DC3000) protein is Ribosomal RNA large subunit methyltransferase F.